The chain runs to 410 residues: SPbeta prophage-derived uncharacterized protein YonV (410 aa).

The protein is SPbeta prophage-derived uncharacterized protein YonV (yonV) of Bacillus subtilis (strain 168).